Consider the following 280-residue polypeptide: Protein lyl-1 (280 aa).

A disordered region spans residues 1–60; sequence MCPPQAQAEVGPTMTEKAEMVCAPSPAPAPPPKPASPGPPQVEEVGHRGGSSPPRLPPGV. Positions 25 to 40 are enriched in pro residues; the sequence is SPAPAPPPKPASPGPP. Residues 150-202 form the bHLH domain; sequence ARRVFTNSRERWRQQNVNGAFAELRKLLPTHPPDRKLSKNEVLRLAMKYIGFL. The tract at residues 214 to 280 is disordered; that stretch reads AAGPTPPGPR…EQTALSPEVR (67 aa). Residues 229 to 245 show a composition bias toward basic and acidic residues; it reads RVPDDGARRGSGRRAEA. The segment covering 257-267 has biased composition (low complexity); the sequence is PDGSPGGAARP. Serine 260 and serine 276 each carry phosphoserine.

As to quaternary structure, efficient DNA binding requires dimerization with another bHLH protein.

It is found in the nucleus. The sequence is that of Protein lyl-1 (LYL1) from Homo sapiens (Human).